The following is a 706-amino-acid chain: F-box/WD repeat-containing protein 7 (706 aa).

Positions 1 to 157 are disordered; it reads MNQELLSVGS…IVDLPIHQRS (157 aa). S26 carries the phosphoserine modification. Over residues 32–54 the composition is skewed to basic and acidic residues; sequence QMNRVLEEEQQQPRHQEEEHAAR. Residues 69–83 are compositionally biased toward polar residues; the sequence is NDPQQGQLEENNNRF. The span at 86–128 shows a compositional bias: acidic residues; sequence VDEDSSGNQEEQEEDEEHAGEQDEEDEEEEEMDQESDDFDQSD. Over residues 129–138 the composition is skewed to basic and acidic residues; it reads DSSREDEHTH. The residue at position 204 (T204) is a Phosphothreonine. A Phosphoserine modification is found at S226. Residues 277 to 323 form the F-box domain; that stretch reads RDFISLLPKELALYVLSFLEPKDLLQAAQTCRYWRILAEDNLLWREK. WD repeat units follow at residues 377 to 417, 419 to 455, 458 to 497, 499 to 535, 538 to 577, 579 to 617, and 621 to 658; these read GHDD…RTLV, HTGGVWSSQMRDNIIISGSTDRTLKVWNAETGECIHT, GHTSTVRCMHLHEKRVVSGSRDATLRVWDIETGQCLHVLM, HVAAVRCVQYDGRRVVSGAYDFMVKVWDPETETCLHT, GHTNRVYSLQFDGIHVVSGSLDTSIRVWDVETGNCIHTLT, HQSLTSGMELKDNILVSGNADSTVKIWDIKTGQCLQTLQ, and KHQSAVTCLQFNKNFVITSSDDGTVKLWDLKTGEFIRN.

In terms of assembly, homodimer; homodimerization plays a role in substrate binding and/or ubiquitination and degradation. Component of the SCF(FBXW7) complex consisting of CUL1, RBX1, SKP1 and FBXW7. Interacts (via F-box domain) with SKP1. Interacts (via F-box domain) with pseudophosphatase STYX; the interaction is direct and prevents FBXW7 interaction with SKP1. Interacts with cyclin-E (CCNE1 or CCNE2). Interacts with PSEN1. Forms a trimeric complex with NOTCH1 and SGK1. Interacts with NOTCH1 intracellular domain/NICD and NOTCH4 intracellular domain/NICD. Interacts with NOTCH2 intracellular domain (N2ICD). Interacts with MYC (when phosphorylated). Interacts with USP28, counteracting ubiquitination of MYC. Interacts with JUN. Found in a complex with JUN and PRR7. Interacts with JUN and PRR7; the interaction inhibits ubiquitination-mediated JUN degradation, promoting its phosphorylation and transcriptional activity. Interacts (when phosphorylated at Thr-204) with PIN1, disrupting FBXW7 dimerization and promoting FBXW7 autoubiquitination and degradation. Interacts with UBE2QL1. Interacts with FAM83D; promotes FBXW7 degradation. Interacts with MYCN; FBXW7 competes with AURKA for binding to unphosphorylated MYCN but not for binding to phosphorylated MYCN. Interacts with STOML1. Interacts with NFE2L1. Interacts with USP36, counteracting ubiquitination of MYC. Interacts with RICTOR; mediates RICTOR ubiquitination and degradation.l Interacts with USP38, counteracting ubiquitination of MYC. As to quaternary structure, (Microbial infection) In case of infection, interacts with T.annulata PIN1 (TaPIN1); leading to FBXW7 autoubiquitination and subsequent degradation: FBXW7 degradation promotes stabilization of JUN, which promotes cell transformation. In terms of processing, phosphorylation at Thr-204 promotes interaction with PIN1, leading to disrupt FBXW7 dimerization and promoting FBXW7 autoubiquitination and degradation. Phosphorylated by ATM at Ser-26 in response to DNA damage, promoting recruitment to DNA damage sites and 'Lys-63'-linked ubiquitination of phosphorylated XRCC4. Post-translationally, ubiquitinated: autoubiquitinates following phosphorylation at Thr-204 and subsequent interaction with PIN1. Ubiquitination leads to its degradation.

The protein resides in the nucleus. It localises to the nucleoplasm. Its subcellular location is the chromosome. It participates in protein modification; protein ubiquitination. Substrate recognition component of a SCF (SKP1-CUL1-F-box protein) E3 ubiquitin-protein ligase complex which mediates the ubiquitination and subsequent proteasomal degradation of target proteins. Recognizes and binds phosphorylated sites/phosphodegrons within target proteins and thereafter brings them to the SCF complex for ubiquitination. Identified substrates include cyclin-E (CCNE1 or CCNE2), DISC1, JUN, MYC, NOTCH1 released notch intracellular domain (NICD), NOTCH2, MCL1, MLST8, RICTOR, and probably PSEN1. Acts as a negative regulator of JNK signaling by binding to phosphorylated JUN and promoting its ubiquitination and subsequent degradation. SCF(FBXW7) complex mediates the ubiquitination and subsequent degradation of NFE2L1. Involved in bone homeostasis and negative regulation of osteoclast differentiation. Also able to promote 'Lys-63'-linked ubiquitination in response to DNA damage. The SCF(FBXW7) complex facilitates double-strand break repair following phosphorylation by ATM: phosphorylation promotes localization to sites of double-strand breaks and 'Lys-63'-linked ubiquitination of phosphorylated XRCC4, enhancing DNA non-homologous end joining. This chain is F-box/WD repeat-containing protein 7, found in Bos taurus (Bovine).